A 508-amino-acid polypeptide reads, in one-letter code: MEILRTKSQSAAVVIGISKFFDEKENRDVIVTASDFKRNNAFIFKDSGNYFLGLENIFRNSLDELKDILILAGGSISKSKITQAGLSHMITFLEKLCLSDDAGVNKALIFIVFQIHDSSQRRGGVCTLFDVLYNYLVQRKLNQESEFLSYGTYKEKKYIYINGKTVTYVCKNADALTIKELANSKSHMTYADTIGSFRKNASGMDAVTFLTVKMDTMHTASIFGKTYNIGQLYYRQLNVEVNTLKKVLANIDDHSRVKMHGNSRDGFVKRLDDAGKSRATGLIRALDHSNSIRFKSIGMGRDEKLSYVVDSCFIRKMQNGRGLCVTIDNINKLIEHKLVHDCGIGRTCSCGAKACDDESLLDQLAERGHDVVANAKEAMSAMCDDEEHAEKIAVTKSDAKLDDRIVQGKGSRYMSASVYRSRLNTESTTTNNAQSPVSDPVNASANVKTSPAGTHTDESVMKKEDHGVIVNESTTFKINSDVVFDAAEATFADTSSGLSSLLKTKMKF.

Residues 424-453 (NTESTTTNNAQSPVSDPVNASANVKTSPAG) show a composition bias toward polar residues. Residues 424 to 464 (NTESTTTNNAQSPVSDPVNASANVKTSPAGTHTDESVMKKE) are disordered. A compositionally biased stretch (basic and acidic residues) spans 455 to 464 (HTDESVMKKE).

This is Non-structural protein 1 (Segment-5) from Banna virus (BAV).